A 265-amino-acid polypeptide reads, in one-letter code: HUWE1-associated protein modifying stress responses (265 aa).

4 disordered regions span residues 1 to 22 (MEDK…HWFS), 145 to 170 (RNSR…GSSV), 195 to 218 (VRSS…RRNG), and 240 to 265 (GTRK…NRMI). 2 stretches are compositionally biased toward polar residues: residues 156–170 (VSPN…GSSV) and 195–212 (VRSS…SSNT).

This sequence belongs to the TAPR1 family. In terms of assembly, oligomer.

Its subcellular location is the nucleus. It localises to the cytoplasm. Its function is as follows. Acts as a central player within a network of stress response pathways promoting cellular adaptability. Functions as a negative regulator of TP53/P53 in the cellular response to telomere erosion and probably also DNA damage. This chain is HUWE1-associated protein modifying stress responses, found in Xenopus laevis (African clawed frog).